We begin with the raw amino-acid sequence, 375 residues long: Growth/differentiation factor 8 (375 aa).

The first 18 residues, 1 to 18 (MQKLQIFVYIYLFMLTVA), serve as a signal peptide directing secretion. The propeptide occupies 19–266 (GPVDLNENSE…VTDTPKRARR (248 aa)). Asparagine 48 and asparagine 71 each carry an N-linked (GlcNAc...) asparagine glycan. 4 cysteine pairs are disulfide-bonded: cysteine 272/cysteine 282, cysteine 281/cysteine 340, cysteine 309/cysteine 372, and cysteine 313/cysteine 374.

Belongs to the TGF-beta family. In terms of assembly, homodimer; disulfide-linked. Interacts with WFIKKN2, leading to inhibit its activity. Interacts with FSTL3. In terms of processing, synthesized as large precursor molecule that undergoes proteolytic cleavage to generate an N-terminal propeptide and a disulfide linked C-terminal dimer, which is the biologically active molecule. The circulating form consists of a latent complex of the C-terminal dimer and other proteins, including its propeptide, which maintain the C-terminal dimer in a latent, inactive state. Ligand activation requires additional cleavage of the prodomain by a tolloid-like metalloproteinase.

It is found in the secreted. In terms of biological role, acts specifically as a negative regulator of skeletal muscle growth. The chain is Growth/differentiation factor 8 (MSTN) from Sylvicapra grimmia (Grey duiker).